Reading from the N-terminus, the 416-residue chain is Histidine--tRNA ligase (416 aa).

This sequence belongs to the class-II aminoacyl-tRNA synthetase family. In terms of assembly, homodimer.

It localises to the cytoplasm. The enzyme catalyses tRNA(His) + L-histidine + ATP = L-histidyl-tRNA(His) + AMP + diphosphate + H(+). The chain is Histidine--tRNA ligase from Clostridium novyi (strain NT).